Reading from the N-terminus, the 344-residue chain is Anthranilate phosphoribosyltransferase (344 aa).

5-phospho-alpha-D-ribose 1-diphosphate contacts are provided by residues G86, 89-90 (GD), T94, 96-99 (NIST), 114-122 (KHGNKSASG), and S126. G86 contributes to the anthranilate binding site. A Mg(2+)-binding site is contributed by S98. Anthranilate is bound at residue N117. R172 provides a ligand contact to anthranilate. The Mg(2+) site is built by D231 and E232.

This sequence belongs to the anthranilate phosphoribosyltransferase family. Homodimer. The cofactor is Mg(2+).

The enzyme catalyses N-(5-phospho-beta-D-ribosyl)anthranilate + diphosphate = 5-phospho-alpha-D-ribose 1-diphosphate + anthranilate. Its pathway is amino-acid biosynthesis; L-tryptophan biosynthesis; L-tryptophan from chorismate: step 2/5. Catalyzes the transfer of the phosphoribosyl group of 5-phosphorylribose-1-pyrophosphate (PRPP) to anthranilate to yield N-(5'-phosphoribosyl)-anthranilate (PRA). The polypeptide is Anthranilate phosphoribosyltransferase (Prochlorococcus marinus (strain MIT 9301)).